The sequence spans 115 residues: Large ribosomal subunit protein bL19 (115 aa).

Belongs to the bacterial ribosomal protein bL19 family.

In terms of biological role, this protein is located at the 30S-50S ribosomal subunit interface and may play a role in the structure and function of the aminoacyl-tRNA binding site. The protein is Large ribosomal subunit protein bL19 of Desulfovibrio desulfuricans (strain ATCC 27774 / DSM 6949 / MB).